The following is a 440-amino-acid chain: Chitinase-like protein Idgf2 (440 aa).

A signal peptide spans 1–20 (MKAWIWFTFVACLFAASTEA). Positions 22–440 (SNLVCYYDSS…PILRAIKYRL (419 aa)) constitute a GH18 domain. A disulfide bridge links Cys26 with Cys53. Asn220 carries N-linked (GlcNAc...) asparagine glycosylation. Cys342 and Cys425 form a disulfide bridge.

The protein belongs to the glycosyl hydrolase 18 family. IDGF subfamily. Glycosylated. Primarily expressed in yolk cells and fat body. In larvae, it is expressed in the imaginal ring and weakly expressed in imaginal disks. More strongly expressed than Idgf1 and Idgf3.

Its subcellular location is the secreted. Functionally, cooperates with insulin-like peptides to stimulate the proliferation, polarization and motility of imaginal disk cells. May act by stabilizing the binding of insulin-like peptides to its receptor through a simultaneous interaction with both molecules to form a multiprotein signaling complex. The chain is Chitinase-like protein Idgf2 (Idgf2) from Drosophila melanogaster (Fruit fly).